The sequence spans 75 residues: OcyC3 (75 aa).

The first 22 residues, 1 to 22 (MQYKTFLVISLAYLLVADEAAA), serve as a signal peptide directing secretion. The propeptide occupies 51 to 75 (EINNVFEPYHENLDLELERFLSQLQ).

As to expression, expressed by the venom gland.

The protein localises to the secreted. It localises to the target cell membrane. In terms of biological role, amphipathic peptide with probable antimicrobial activity. May act by disrupting the integrity of the bacterial cell membrane. The protein is OcyC3 of Opisthacanthus cayaporum (South American scorpion).